The sequence spans 521 residues: Colicin-E1* (521 aa).

Disordered regions lie at residues 26-52 (NGNP…AAIH) and 127-163 (SGCA…EKEQ). The segment covering 30 to 42 (DGSGSGGGGGTGG) has biased composition (gly residues). The segment covering 133-145 (KQKKKPVKKRKRA) has biased composition (basic residues). Residues 146-163 (EKSFQEAEQRRKEIEKEQ) show a composition bias toward basic and acidic residues. 2 helical membrane passes run 470-486 (AVDA…FSVL) and 493-509 (IWGI…FIDK).

It belongs to the channel forming colicin family.

The protein resides in the cell membrane. Functionally, this colicin is a channel-forming colicin. This class of transmembrane toxins depolarize the cytoplasmic membrane, leading to dissipation of cellular energy. Colicins are polypeptide toxins produced by and active against E.coli and closely related bacteria. This Shigella sonnei protein is Colicin-E1* (cea).